A 593-amino-acid chain; its full sequence is Zinc metalloproteinase-disintegrin-like kaouthiagin-like (593 aa).

An N-terminal signal peptide occupies residues M1–S20. The propeptide occupies I21 to E196. The 196-residue stretch at K205–P400 folds into the Peptidase M12B domain. E208 and D292 together coordinate Ca(2+). Intrachain disulfides connect C316–C395, C356–C379, and C358–C363. N319 carries N-linked (GlcNAc...) asparagine glycosylation. Residues H341, H345, and H351 each contribute to the Zn(2+) site. 8 residues coordinate Ca(2+): C395, N398, I410, N413, F415, E417, E420, and D423. The 70-residue stretch at P408–N477 folds into the Disintegrin domain. 12 disulfide bridges follow: C411/C440, C422/C435, C424/C430, C434/C462, C449/C469, C456/C488, C481/C493, C500/C550, C515/C558, C528/C538, C545/C581, and C575/C586. The D/ECD-tripeptide motif lies at D455–D457. Ca(2+) contacts are provided by D457, L458, E460, D472, and S473. N490 carries N-linked (GlcNAc...) asparagine glycosylation.

Belongs to the venom metalloproteinase (M12B) family. P-III subfamily. P-IIIa sub-subfamily. As to quaternary structure, monomer. Zn(2+) is required as a cofactor. As to expression, expressed by the venom gland.

It is found in the secreted. Its function is as follows. Snake venom zinc metalloproteinase that cleaves the membrane-bound precursor of TNF-alpha (TNF) into its mature soluble form showing the same digestion pattern than ADAM17. In Naja atra (Chinese cobra), this protein is Zinc metalloproteinase-disintegrin-like kaouthiagin-like.